We begin with the raw amino-acid sequence, 116 residues long: Large ribosomal subunit protein uL18 (116 aa).

The protein belongs to the universal ribosomal protein uL18 family. In terms of assembly, part of the 50S ribosomal subunit; part of the 5S rRNA/L5/L18/L25 subcomplex. Contacts the 5S and 23S rRNAs.

In terms of biological role, this is one of the proteins that bind and probably mediate the attachment of the 5S RNA into the large ribosomal subunit, where it forms part of the central protuberance. This is Large ribosomal subunit protein uL18 from Shewanella loihica (strain ATCC BAA-1088 / PV-4).